We begin with the raw amino-acid sequence, 131 residues long: MSLSRHDIRKIAFQTLFALGSNPDANSEDIYQELLDEDNNDSDLSYLNELVDGVLDHQSEIDMEITKYLRKNWNIGRLNKTDLIILRIAIFEIKYSDVASKIAVNEAVELAKEFSDDKSYKFVNAILQNLI.

Belongs to the NusB family.

Involved in transcription antitermination. Required for transcription of ribosomal RNA (rRNA) genes. Binds specifically to the boxA antiterminator sequence of the ribosomal RNA (rrn) operons. In Ligilactobacillus salivarius (strain UCC118) (Lactobacillus salivarius), this protein is Transcription antitermination protein NusB.